A 108-amino-acid polypeptide reads, in one-letter code: Thaicobrin (108 aa).

A B30.2/SPRY domain is found at S1–G108.

The protein belongs to the ohanin/vespryn family. In terms of tissue distribution, expressed by the venom gland.

The protein resides in the secreted. Neurotoxin that produces dose-dependent hypolocomotion and hyperalgesia in mice. May directly act on the central nervous system, as it is 6500-fold more potent when administered intracerebroventricularly than intraperitoneal. The protein is Thaicobrin of Naja kaouthia (Monocled cobra).